Here is an 814-residue protein sequence, read N- to C-terminus: Probable G-protein coupled receptor 156 (814 aa).

The Extracellular portion of the chain corresponds to 1–47 (MEPEINCSELCDSFPGQELDRRPLHDLCKTTITSSHHSSKTISSLSP). Asparagine 6 carries an N-linked (GlcNAc...) asparagine glycan. The chain crosses the membrane as a helical span at residues 48–68 (VLLGIVWTFLSCGLLLILFFL). Topologically, residues 69–86 (AFTIHCRKNRIVKMSSPN) are cytoplasmic. A helical membrane pass occupies residues 87–107 (LNIVTLLGSCLTYSSAYLFGI). Residues 108 to 118 (QDVLVGSSMET) are Extracellular-facing. Residues 119-139 (LIQTRLSMLCIGTSLVFGPIL) form a helical membrane-spanning segment. Topologically, residues 140-164 (GKSWRLYKVFTQRVPDKRVIIKDLQ) are cytoplasmic. A helical transmembrane segment spans residues 165 to 185 (LLGLVAALLMADVILLMTWVL). Residues 186–222 (TDPIQCLQILSVSMTVTGKDVSCTSTSTHFCASRYSD) are Extracellular-facing. The chain crosses the membrane as a helical span at residues 223 to 243 (VWIALIWGCKGLLLLYGAYLA). Residues 244–257 (GLTGHVSSPPVNQS) are Cytoplasmic-facing. Residues 258 to 278 (LTIMVGVNLLVLAAGLLFVVT) traverse the membrane as a helical segment. Over 279–288 (RYLHSWPNLV) the chain is Extracellular. A helical membrane pass occupies residues 289 to 309 (FGLTSGGIFVCTTTINCFIFI). At 310-814 (PQLKQWKAFE…FKDDLKPTLV (505 aa)) the chain is on the cytoplasmic side. The stretch at 354–390 (EKSSMERLLTEKNAVIESLQEQVNNAKEKIVRLMSAE) forms a coiled coil. 3 disordered regions span residues 422–545 (AQGP…SSVI), 557–724 (GLGP…PEQW), and 769–792 (SSSD…LASW). A compositionally biased stretch (polar residues) spans 443–454 (SQCTSGPSSYAQ). Over residues 468-484 (GKEEKISDSKDFSDHLD) the composition is skewed to basic and acidic residues. Over residues 486-496 (GCSQKPWTEQS) the composition is skewed to polar residues. Over residues 523–545 (QRQRHLENSEEPPERRSRVSSVI) the composition is skewed to basic and acidic residues. The span at 563–581 (SLSTAPSCHQQTWKNSAAF) shows a compositional bias: polar residues. Residues 599-610 (VRRRRAAQRARS) are compositionally biased toward basic residues. A compositionally biased stretch (polar residues) spans 639-651 (NGDSPSLAPQTTD). A compositionally biased stretch (low complexity) spans 769 to 780 (SSSDSSDSGTSD).

The protein belongs to the G-protein coupled receptor 3 family. GABA-B receptor subfamily. In terms of tissue distribution, ubiquitous expression both in the CNS and in peripheral tissues. Very high expression in fetal brain and testis relative to expression in other tissues.

Its subcellular location is the cell membrane. In terms of biological role, orphan G-protein coupled receptor involved in the regulation of hair cell orientation in mechanosensory organs of the inner ear. It is required to trigger a 180 degree reversal in hair cell orientation, creating a virtual line of polarity reversal (LPR) across which stereociliary bundles are arranged in opposite orientations. The chain is Probable G-protein coupled receptor 156 (GPR156) from Homo sapiens (Human).